We begin with the raw amino-acid sequence, 49 residues long: uncharacterized protein (49 aa).

The signal sequence occupies residues 1 to 22; that stretch reads MIQKPILLSSFLFLYIRALLHS.

This is an uncharacterized protein from Saccharomyces cerevisiae (strain ATCC 204508 / S288c) (Baker's yeast).